The following is a 213-amino-acid chain: Heterochromatin protein 1 (213 aa).

2 disordered regions span residues 1–24 (MGKK…EEEY) and 74–151 (RKDE…TGFD). Residues 24-82 (YAVEKILDRRVRKGKVEYYLKWKGYAETENTWEPEGNLDCQDLIQQYELSRKDEANAAA) form the Chromo 1 domain. The span at 89-104 (SKKERPGSSTKVKETG) shows a compositional bias: basic and acidic residues. Positions 105 to 115 (RTSTTASNSSG) are enriched in polar residues. A Chromo 2 domain is found at 154 to 212 (LEAEKILGASDNNGRLTFLIQFKGVDQAEMVPSTVANVKIPQMVIRFYEERLSWYSDNE).

It is found in the nucleus. Its function is as follows. Structural component of heterochromatin, involved in gene repression and the modification of position-effect-variegation. Recognizes and binds histone H3 tails methylated at 'Lys-9', leading to epigenetic repression. This is Heterochromatin protein 1 (HP1A) from Drosophila virilis (Fruit fly).